A 175-amino-acid chain; its full sequence is Bifunctional protein PyrR (175 aa).

Residues 40 to 41, 102 to 110, R135, and V159 each bind substrate; these read TR and DDVLYTGRT. Residues 98–110 carry the PRPP-binding motif; sequence VVIIDDVLYTGRT.

Belongs to the purine/pyrimidine phosphoribosyltransferase family. PyrR subfamily. As to quaternary structure, homodimer and homohexamer; in equilibrium.

The catalysed reaction is UMP + diphosphate = 5-phospho-alpha-D-ribose 1-diphosphate + uracil. Functionally, regulates transcriptional attenuation of the pyrimidine nucleotide (pyr) operon by binding in a uridine-dependent manner to specific sites on pyr mRNA. This disrupts an antiterminator hairpin in the RNA and favors formation of a downstream transcription terminator, leading to a reduced expression of downstream genes. Also displays a weak uracil phosphoribosyltransferase activity which is not physiologically significant. This is Bifunctional protein PyrR from Staphylococcus epidermidis (strain ATCC 12228 / FDA PCI 1200).